Consider the following 274-residue polypeptide: 2-dehydro-3-deoxyphosphooctonate aldolase (274 aa).

Belongs to the KdsA family.

The protein resides in the cytoplasm. The enzyme catalyses D-arabinose 5-phosphate + phosphoenolpyruvate + H2O = 3-deoxy-alpha-D-manno-2-octulosonate-8-phosphate + phosphate. Its pathway is carbohydrate biosynthesis; 3-deoxy-D-manno-octulosonate biosynthesis; 3-deoxy-D-manno-octulosonate from D-ribulose 5-phosphate: step 2/3. The protein operates within bacterial outer membrane biogenesis; lipopolysaccharide biosynthesis. The chain is 2-dehydro-3-deoxyphosphooctonate aldolase from Legionella pneumophila (strain Corby).